The sequence spans 68 residues: Conotoxin phi-MiXXVIIB (68 aa).

Positions 1–29 (MRFFFLLLTVALFLTSITGDDAERMLGMK) are cleaved as a signal peptide. Residues 30–35 (EGGYVR) constitute a propeptide that is removed on maturation. 4 disulfide bridges follow: cysteine 38–cysteine 49, cysteine 42–cysteine 51, cysteine 45–cysteine 56, and cysteine 50–cysteine 61. Proline 44 carries the post-translational modification 4-hydroxyproline.

This sequence belongs to the conotoxin G2 superfamily. 1 family. Expressed by the venom duct.

The protein localises to the secreted. In terms of biological role, this peptide promotes cell proliferation (EC(50)=17.85 uM) and inhibits apoptosis (EC(50)=2.2 uM). This Conus miles (Soldier cone) protein is Conotoxin phi-MiXXVIIB.